Here is a 729-residue protein sequence, read N- to C-terminus: Cytoplasmic polyadenylation element-binding protein 4 (729 aa).

Disordered regions lie at residues 20–50 (FPVRFHPHLQPPHHHQNATPNPAAFINNNTA) and 78–133 (EKAK…KEKL). Basic residues predominate over residues 24 to 35 (FHPHLQPPHHHQ). A compositionally biased stretch (low complexity) spans 83–96 (QQQEQQDPLEKQQL). Residues S97, S99, and S137 each carry the phosphoserine modification. A disordered region spans residues 218–324 (FGGSFSPQIG…RDHRRGLNGG (107 aa)). Basic residues predominate over residues 232–249 (HHPHHPHFQHHHSQHQQQ). 2 positions are modified to phosphoserine: S252 and S255. The segment covering 285–300 (WSSYQSPSPTPSSSWS) has biased composition (low complexity). Positions 301 to 311 (PGGGGYGGWGA) are enriched in gly residues. A Phosphothreonine modification is found at T326. Phosphoserine is present on residues S330 and S332. RRM domains are found at residues 472–563 (RKVF…PWNL) and 580–662 (KTIF…PYVL). Positions 541 to 543 (KLY) are RNA-binding. Zn(2+) is bound by residues C667, C675, C684, C689, C694, C697, H702, and H710.

It belongs to the RRM CPEB family. In terms of assembly, interacts with TOB1. In terms of tissue distribution, highly expressed in brain, including hippocampus, amygdala, granule and Purkinje cells of the cerebellum (at protein level). Expressed in spinal cord (at protein level). Expressed in kidney, lung and heart (at protein level). Expressed in liver (at protein level). Expressed in spleen and testis (at protein level). Weakly expressed in ovary and in granular cells of dentate gyrus and the pyramidal cells of CA3 and CA1 of the hippocampus.

It is found in the cytoplasm. It localises to the cell projection. Its subcellular location is the dendrite. The protein localises to the dendritic spine. The protein resides in the postsynaptic density. It is found in the axon. It localises to the growth cone. Its subcellular location is the endoplasmic reticulum. The protein localises to the perinuclear region. Its function is as follows. Sequence-specific RNA-binding protein that binds to the cytoplasmic polyadenylation element (CPE), an uridine-rich sequence element (consensus sequence 5'-UUUUUAU-3') within the mRNA 3'-UTR. RNA binding results in a clear conformational change analogous to the Venus fly trap mechanism. Regulates activation of unfolded protein response (UPR) in the process of adaptation to ER stress in liver, by maintaining translation of CPE-regulated mRNAs in conditions in which global protein synthesis is inhibited. Required for cell cycle progression, specifically for cytokinesis and chromosomal segregation. Plays a role as an oncogene promoting tumor growth and progression by positively regulating translation of t-plasminogen activator/PLAT. Stimulates proliferation of melanocytes. In contrast to CPEB1 and CPEB3, does not play role in synaptic plasticity, learning and memory. This chain is Cytoplasmic polyadenylation element-binding protein 4 (Cpeb4), found in Mus musculus (Mouse).